The following is a 396-amino-acid chain: Ribosomal RNA large subunit methyltransferase I (396 aa).

The region spanning 2-79 (SVFIYLVKGR…KEETVDLDFF (78 aa)) is the PUA domain.

Belongs to the methyltransferase superfamily. RlmI family.

It localises to the cytoplasm. The enzyme catalyses cytidine(1962) in 23S rRNA + S-adenosyl-L-methionine = 5-methylcytidine(1962) in 23S rRNA + S-adenosyl-L-homocysteine + H(+). In terms of biological role, specifically methylates the cytosine at position 1962 (m5C1962) of 23S rRNA. In Aeromonas salmonicida (strain A449), this protein is Ribosomal RNA large subunit methyltransferase I.